Reading from the N-terminus, the 266-residue chain is Phage-like element PBSX protein XkdC (266 aa).

124–131 (GQPGSGKT) lines the ATP pocket.

To B.subtilis YqaM.

Functionally, may function as a transcriptional antiterminator. This is Phage-like element PBSX protein XkdC (xkdC) from Bacillus subtilis (strain 168).